Here is a 142-residue protein sequence, read N- to C-terminus: Small ribosomal subunit protein uS12 (142 aa).

Belongs to the universal ribosomal protein uS12 family. In terms of assembly, part of the 30S ribosomal subunit.

Its function is as follows. With S4 and S5 plays an important role in translational accuracy. Located at the interface of the 30S and 50S subunits. This is Small ribosomal subunit protein uS12 from Thermoplasma volcanium (strain ATCC 51530 / DSM 4299 / JCM 9571 / NBRC 15438 / GSS1).